The chain runs to 253 residues: Endonuclease NucS (253 aa).

Residues 63–91 (IDDPDTDFTDGSSVGNSEEQGTDGSAHTA) are disordered. The segment covering 71-87 (TDGSSVGNSEEQGTDGS) has biased composition (polar residues).

It belongs to the NucS endonuclease family.

The protein localises to the cytoplasm. Functionally, cleaves both 3' and 5' ssDNA extremities of branched DNA structures. This Corynebacterium kroppenstedtii (strain DSM 44385 / JCM 11950 / CIP 105744 / CCUG 35717) protein is Endonuclease NucS.